Consider the following 1027-residue polypeptide: 2-oxoglutarate dehydrogenase, mitochondrial (1027 aa).

Thiamine diphosphate-binding residues include arginine 315, aspartate 413, asparagine 446, isoleucine 448, and glutamine 674. Aspartate 413, asparagine 446, and isoleucine 448 together coordinate Mg(2+).

Belongs to the alpha-ketoglutarate dehydrogenase family. Homodimer. Component of the 2-oxoglutarate dehydrogenase complex. Thiamine diphosphate is required as a cofactor. Requires Mg(2+) as cofactor.

It is found in the mitochondrion matrix. It carries out the reaction N(6)-[(R)-lipoyl]-L-lysyl-[protein] + 2-oxoglutarate + H(+) = N(6)-[(R)-S(8)-succinyldihydrolipoyl]-L-lysyl-[protein] + CO2. The 2-oxoglutarate dehydrogenase complex catalyzes the overall conversion of 2-oxoglutarate to succinyl-CoA and CO(2). It contains multiple copies of three enzymatic components: 2-oxoglutarate dehydrogenase (E1), dihydrolipoamide succinyltransferase (E2) and lipoamide dehydrogenase (E3). This Caenorhabditis briggsae protein is 2-oxoglutarate dehydrogenase, mitochondrial (ogdh-1).